The chain runs to 197 residues: Protein jagunal (197 aa).

At 1 to 39 (MATRGGPMVAGTDGNDFEFRQRVAGTYQISLLNKSRLKY) the chain is on the cytoplasmic side. Residues 40–60 (CIFFHALLFFVMLAKLTSDIL) traverse the membrane as a helical segment. At 61 to 78 (DRLDIFVLEIEELEVPSP) the chain is on the lumenal side. The chain crosses the membrane as a helical span at residues 79-99 (LWWEYVWAGSLLTSFLGLSAA). Topologically, residues 100–109 (RGNKVREMQK) are cytoplasmic. Residues 110–130 (YMIAILVFAILPLLYCFAYYF) traverse the membrane as a helical segment. Residues 131–159 (SDVWEFATMDKSVELDETDIFIWRGYPYG) are Lumenal-facing. A helical membrane pass occupies residues 160–180 (VFWYAFCFVGFQVHGFTLYFA). Residues 181–197 (YNLVKVWKARTATRKFQ) lie on the Cytoplasmic side of the membrane.

This sequence belongs to the jagunal family.

It is found in the endoplasmic reticulum membrane. Required for endoplasmic reticulum organization and proper vesicular traffic during vitellogenesis. Required for oocyte and bristle growth. This chain is Protein jagunal, found in Drosophila pseudoobscura pseudoobscura (Fruit fly).